The sequence spans 249 residues: Type I iodothyronine deiodinase (249 aa).

At 1–12 (MGLPRPGLWLKR) the chain is on the extracellular side. A helical; Signal-anchor for type III membrane protein membrane pass occupies residues 13-33 (LWVLVQVAVEVAVGKVLMTLF). Residues 34–249 (PERVKQNILA…VRAVLEELHS (216 aa)) are Cytoplasmic-facing. The active site involves selenocysteine 126. Position 126 (selenocysteine 126) is a non-standard amino acid, selenocysteine.

Belongs to the iodothyronine deiodinase family. As to quaternary structure, predominantly monomer. Can form homodimers but homodimerization is not essential for enzyme activity.

Its subcellular location is the cell membrane. It localises to the endoplasmic reticulum membrane. The protein localises to the basolateral cell membrane. It carries out the reaction 3,3',5-triiodo-L-thyronine + iodide + A + H(+) = L-thyroxine + AH2. The enzyme catalyses 3,3',5'-triiodo-L-thyronine + iodide + A + H(+) = L-thyroxine + AH2. The catalysed reaction is 3,3'-diiodo-L-thyronine + iodide + A + H(+) = 3,3',5'-triiodo-L-thyronine + AH2. It catalyses the reaction 3,3'-diiodo-L-thyronine + iodide + A + H(+) = 3,3',5-triiodo-L-thyronine + AH2. It carries out the reaction 3'-iodo-L-thyronine + iodide + A + H(+) = 3',5'-diiodo-L-thyronine + AH2. The enzyme catalyses 3-iodo-L-thyronine + iodide + A + H(+) = 3,5-diiodo-L-thyronine + AH2. The catalysed reaction is 3-iodo-L-thyronine + iodide + A + H(+) = 3,3'-diiodo-L-thyronine + AH2. It catalyses the reaction 3,3'-diiodothyronamine + iodide + A + H(+) = 3,3',5'-triiodothyronamine + AH2. It carries out the reaction 3'-iodothyronamine + iodide + A + H(+) = 3',5'-diiodothyronamine + AH2. The enzyme catalyses 3-iodothyronamine + iodide + A + H(+) = 3,3'-diiodothyronamine + AH2. The catalysed reaction is 3,3'-diiodothyronamine + iodide + A + H(+) = 3,3',5-triiodothyronamine + AH2. It catalyses the reaction 3-iodothyronamine + iodide + A + H(+) = 3,5-diiodothyronamine + AH2. It carries out the reaction 3,3'-diiodo-L-thyronine sulfate + iodide + A + H(+) = 3,3',5'-triiodo-L-thyronine sulfate + AH2. The enzyme catalyses 3,3',5'-triiodo-L-thyronine sulfate + iodide + A + H(+) = L-thyroxine sulfate + AH2. The catalysed reaction is 3,3'-diiodo-L-thyronine sulfate + iodide + A + H(+) = 3,3',5-triiodo-L-thyronine sulfate + AH2. Its function is as follows. Plays a crucial role in the metabolism of thyroid hormones (TH) and has specific roles in TH activation and inactivation by deiodination. Catalyzes the deiodination of L-thyroxine (T4) to 3,5,3'-triiodothyronine (T3) via outer-ring deiodination (ORD) and of T4 to 3,3',5'-triiodothyronine (rT3) via inner-ring deiodination (IRD). Catalyzes the deiodiantion of rT3 to 3,3'-diiodothyronine (3,3'-T2) and 3',5'-diiodothyronine (3',5'-T2) to 3'-monoiodothyronine (3'-T1) via ORD. Catalyzes the deiodination of T3 to 3,3'-T2, 3,5-diiodothyronine (3,5-T2) to 3-monoiodothyronine (3-T1) and 3,3'-T2 to 3-T1 via IRD. Catalyzes the phenolic ring deiodinations of 3,3',5'-triiodothyronamine, 3',5'-diiodothyronamine and 3,3'-diiodothyronamine as well as tyrosyl ring deiodinations of 3,5,3'-triiodothyronamine and 3,5-diiodothyronamine. Catalyzes the deiodination of L-thyroxine sulfate and 3,3',5-triiodo-L-thyronine sulfate via IRD and of 3,3',5'-triiodo-L-thyronine sulfate via ORD. This Oryctolagus cuniculus (Rabbit) protein is Type I iodothyronine deiodinase (DIO1).